Reading from the N-terminus, the 524-residue chain is GMP synthase [glutamine-hydrolyzing] (524 aa).

Residues 8 to 206 (RILILDFGSQ…IYDICGCEAL (199 aa)) enclose the Glutamine amidotransferase type-1 domain. Cys-85 functions as the Nucleophile in the catalytic mechanism. Active-site residues include His-180 and Glu-182. The GMPS ATP-PPase domain occupies 207 to 399 (WEPRHIIAKS…LGLPFELVYR (193 aa)). 234–240 (SGGVDSS) contacts ATP.

As to quaternary structure, homodimer.

The enzyme catalyses XMP + L-glutamine + ATP + H2O = GMP + L-glutamate + AMP + diphosphate + 2 H(+). It participates in purine metabolism; GMP biosynthesis; GMP from XMP (L-Gln route): step 1/1. Its function is as follows. Catalyzes the synthesis of GMP from XMP. The polypeptide is GMP synthase [glutamine-hydrolyzing] (Nitrosococcus oceani (strain ATCC 19707 / BCRC 17464 / JCM 30415 / NCIMB 11848 / C-107)).